The primary structure comprises 795 residues: Delta-1-pyrroline-5-carboxylate synthase (795 aa).

Positions 1–361 (MLSQVYRYGF…FFSEVKPAGP (361 aa)) are glutamate 5-kinase. The substrate site is built by Ser117, Asp223, and Asn246. ATP contacts are provided by residues 266-267 (SD) and 305-311 (MGGMEAK). Residues Lys311, Lys347, and Lys550 each carry the N6-succinyllysine modification. Residues 362–795 (TVEQQGEMAR…NLPIPQRNTN (434 aa)) form a gamma-glutamyl phosphate reductase region.

This sequence in the N-terminal section; belongs to the glutamate 5-kinase family. It in the C-terminal section; belongs to the gamma-glutamyl phosphate reductase family. In terms of assembly, can form homodimers/multimers.

It localises to the mitochondrion matrix. The catalysed reaction is L-glutamate + ATP = L-glutamyl 5-phosphate + ADP. It catalyses the reaction L-glutamate 5-semialdehyde + phosphate + NADP(+) = L-glutamyl 5-phosphate + NADPH + H(+). It functions in the pathway amino-acid biosynthesis; L-proline biosynthesis; L-glutamate 5-semialdehyde from L-glutamate: step 1/2. Its pathway is amino-acid biosynthesis; L-proline biosynthesis; L-glutamate 5-semialdehyde from L-glutamate: step 2/2. In terms of biological role, bifunctional enzyme that converts glutamate to glutamate 5-semialdehyde, an intermediate in the biosynthesis of proline, ornithine and arginine. This chain is Delta-1-pyrroline-5-carboxylate synthase (ALDH18A1), found in Pongo abelii (Sumatran orangutan).